We begin with the raw amino-acid sequence, 617 residues long: Dihydroxy-acid dehydratase (617 aa).

Mg(2+) is bound at residue Asp-81. Position 122 (Cys-122) interacts with [2Fe-2S] cluster. Mg(2+)-binding residues include Asp-123 and Lys-124. Lys-124 bears the N6-carboxylysine mark. Residue Cys-195 coordinates [2Fe-2S] cluster. Residue Glu-491 coordinates Mg(2+). Ser-517 (proton acceptor) is an active-site residue.

Belongs to the IlvD/Edd family. Homodimer. The cofactor is [2Fe-2S] cluster. Mg(2+) is required as a cofactor.

It carries out the reaction (2R)-2,3-dihydroxy-3-methylbutanoate = 3-methyl-2-oxobutanoate + H2O. It catalyses the reaction (2R,3R)-2,3-dihydroxy-3-methylpentanoate = (S)-3-methyl-2-oxopentanoate + H2O. Its pathway is amino-acid biosynthesis; L-isoleucine biosynthesis; L-isoleucine from 2-oxobutanoate: step 3/4. It functions in the pathway amino-acid biosynthesis; L-valine biosynthesis; L-valine from pyruvate: step 3/4. Its function is as follows. Functions in the biosynthesis of branched-chain amino acids. Catalyzes the dehydration of (2R,3R)-2,3-dihydroxy-3-methylpentanoate (2,3-dihydroxy-3-methylvalerate) into 2-oxo-3-methylpentanoate (2-oxo-3-methylvalerate) and of (2R)-2,3-dihydroxy-3-methylbutanoate (2,3-dihydroxyisovalerate) into 2-oxo-3-methylbutanoate (2-oxoisovalerate), the penultimate precursor to L-isoleucine and L-valine, respectively. The sequence is that of Dihydroxy-acid dehydratase from Hydrogenovibrio crunogenus (strain DSM 25203 / XCL-2) (Thiomicrospira crunogena).